The chain runs to 652 residues: RNA-binding E3 ubiquitin-protein ligase MEX3C (652 aa).

2 disordered regions span residues 15 to 39 (AAPA…ELEG) and 80 to 136 (QARR…EDRP). Over residues 18–33 (APLPQPPPLPPPPPAG) the composition is skewed to pro residues. Acidic residues predominate over residues 101-134 (AELELEVDEEEGEEAELDGELLEEEELEEAEEED). 2 consecutive KH domains span residues 225–286 (TTEC…KREI) and 319–380 (QTTV…REEI). Disordered stretches follow at residues 429-448 (ARMM…SGST) and 506-566 (FEPV…HVGL). Residues 430 to 448 (RMMSNYRNDSSSSLGSGST) show a composition bias toward low complexity. Residues 519–537 (PSGNMKTQRRGSQPSTPRL) show a composition bias toward polar residues. Serine 530 and serine 538 each carry phosphoserine. Residues 544–555 (SIEHPLARRVRS) show a composition bias toward basic and acidic residues. The RING-type zinc finger occupies 601–641 (CVICFENEVIAALVPCGHNLFCMECANKICEKRTPSCPVCQ).

In terms of assembly, interacts with USP7, which antagonizes the ability to degrade mRNA. In terms of processing, phosphorylated.

The protein resides in the nucleus. It is found in the cytoplasm. It catalyses the reaction S-ubiquitinyl-[E2 ubiquitin-conjugating enzyme]-L-cysteine + [acceptor protein]-L-lysine = [E2 ubiquitin-conjugating enzyme]-L-cysteine + N(6)-ubiquitinyl-[acceptor protein]-L-lysine.. RNA-binding protein. May be involved in post-transcriptional regulatory mechanisms, modulating levels of some mRNAs by promoting their degradation in a way involving ubiquitin ligase activity. May act as suppressor of replication stress and chromosome missegregation. This is RNA-binding E3 ubiquitin-protein ligase MEX3C (Mex3c) from Mus musculus (Mouse).